An 841-amino-acid polypeptide reads, in one-letter code: Translation initiation factor IF-2 (841 aa).

The segment at Gln-94–Val-258 is disordered. Basic and acidic residues predominate over residues Ser-96–Arg-136. Low complexity predominate over residues Gln-137–Ala-173. Composition is skewed to basic and acidic residues over residues Asp-174–Arg-194, Asp-200–Pro-217, and Thr-225–Arg-234. The segment covering Arg-235–Ala-248 has biased composition (basic residues). The tr-type G domain occupies Ser-341–Lys-510. A G1 region spans residues Gly-350–Thr-357. Gly-350–Thr-357 is a GTP binding site. The interval Gly-375 to His-379 is G2. Residues Asp-396 to Gly-399 form a G3 region. GTP is bound by residues Asp-396 to His-400 and Asn-450 to Asp-453. Positions Asn-450–Asp-453 are G4. The G5 stretch occupies residues Ser-486 to Lys-488.

The protein belongs to the TRAFAC class translation factor GTPase superfamily. Classic translation factor GTPase family. IF-2 subfamily.

The protein resides in the cytoplasm. One of the essential components for the initiation of protein synthesis. Protects formylmethionyl-tRNA from spontaneous hydrolysis and promotes its binding to the 30S ribosomal subunits. Also involved in the hydrolysis of GTP during the formation of the 70S ribosomal complex. In Pseudomonas fluorescens (strain SBW25), this protein is Translation initiation factor IF-2.